The primary structure comprises 523 residues: 2-isopropylmalate synthase (523 aa).

The region spanning 12-274 (VVIFDTTLRD…WNKIDTTQLT (263 aa)) is the Pyruvate carboxyltransferase domain. Positions 21, 209, 211, and 245 each coordinate Mn(2+). Residues 398–523 (KLLSLSVIAG…AQGAAAAAAS (126 aa)) are regulatory domain.

It belongs to the alpha-IPM synthase/homocitrate synthase family. LeuA type 1 subfamily. Homodimer. Mn(2+) is required as a cofactor.

The protein localises to the cytoplasm. It carries out the reaction 3-methyl-2-oxobutanoate + acetyl-CoA + H2O = (2S)-2-isopropylmalate + CoA + H(+). Its pathway is amino-acid biosynthesis; L-leucine biosynthesis; L-leucine from 3-methyl-2-oxobutanoate: step 1/4. Catalyzes the condensation of the acetyl group of acetyl-CoA with 3-methyl-2-oxobutanoate (2-ketoisovalerate) to form 3-carboxy-3-hydroxy-4-methylpentanoate (2-isopropylmalate). The sequence is that of 2-isopropylmalate synthase from Bradyrhizobium sp. (strain BTAi1 / ATCC BAA-1182).